The following is a 211-amino-acid chain: Endo-1,4-beta-xylanase 4 (211 aa).

Positions 1 to 16 (MKVTAAFAGLLVTAFA) are cleaved as a signal peptide. Positions 19–210 (VPEPVLVSRS…GACSASVTIS (192 aa)) constitute a GH11 domain. N-linked (GlcNAc...) asparagine glycosylation is present at N101. Catalysis depends on E106, which acts as the Nucleophile. The Proton donor role is filled by E197.

The protein belongs to the glycosyl hydrolase 11 (cellulase G) family.

Its subcellular location is the secreted. The enzyme catalyses Endohydrolysis of (1-&gt;4)-beta-D-xylosidic linkages in xylans.. Its pathway is glycan degradation; xylan degradation. Its function is as follows. Endo-1,4-beta-xylanase involved in the hydrolysis of xylan, a major structural heterogeneous polysaccharide found in plant biomass representing the second most abundant polysaccharide in the biosphere, after cellulose. The protein is Endo-1,4-beta-xylanase 4 (XYN4) of Aspergillus niger.